Here is a 176-residue protein sequence, read N- to C-terminus: Acireductone dioxygenase (176 aa).

His100, His102, Glu106, and His145 together coordinate Fe(2+). Ni(2+) contacts are provided by His100, His102, Glu106, and His145.

Belongs to the acireductone dioxygenase (ARD) family. In terms of assembly, monomer. Fe(2+) is required as a cofactor. The cofactor is Ni(2+).

It carries out the reaction 1,2-dihydroxy-5-(methylsulfanyl)pent-1-en-3-one + O2 = 3-(methylsulfanyl)propanoate + CO + formate + 2 H(+). The enzyme catalyses 1,2-dihydroxy-5-(methylsulfanyl)pent-1-en-3-one + O2 = 4-methylsulfanyl-2-oxobutanoate + formate + 2 H(+). It participates in amino-acid biosynthesis; L-methionine biosynthesis via salvage pathway; L-methionine from S-methyl-5-thio-alpha-D-ribose 1-phosphate: step 5/6. In terms of biological role, catalyzes 2 different reactions between oxygen and the acireductone 1,2-dihydroxy-3-keto-5-methylthiopentene (DHK-MTPene) depending upon the metal bound in the active site. Fe-containing acireductone dioxygenase (Fe-ARD) produces formate and 2-keto-4-methylthiobutyrate (KMTB), the alpha-ketoacid precursor of methionine in the methionine recycle pathway. Ni-containing acireductone dioxygenase (Ni-ARD) produces methylthiopropionate, carbon monoxide and formate, and does not lie on the methionine recycle pathway. This is Acireductone dioxygenase from Bacillus pumilus (strain SAFR-032).